The following is a 421-amino-acid chain: Gamma-glutamyl phosphate reductase (421 aa).

Belongs to the gamma-glutamyl phosphate reductase family.

It localises to the cytoplasm. The enzyme catalyses L-glutamate 5-semialdehyde + phosphate + NADP(+) = L-glutamyl 5-phosphate + NADPH + H(+). It participates in amino-acid biosynthesis; L-proline biosynthesis; L-glutamate 5-semialdehyde from L-glutamate: step 2/2. Functionally, catalyzes the NADPH-dependent reduction of L-glutamate 5-phosphate into L-glutamate 5-semialdehyde and phosphate. The product spontaneously undergoes cyclization to form 1-pyrroline-5-carboxylate. This is Gamma-glutamyl phosphate reductase from Pseudomonas fluorescens (strain SBW25).